A 555-amino-acid chain; its full sequence is KHAQRIETWILRHPGFTIMAAILAYTIGTTHFQRALIFILLTAVAPSMTMRCIGISNRDFVEGVSGGSWVDIVLEHGSCVTTMAKNKPTLDFELIKTEAKQPVTLRKYCIEAKLTNTTTESRCPIQGEPSLNEEQDKRFVCKHSMVDRGWGNGCGLFGKGGIVTCAMFTCKKNMKGKVVQPENLEYTIVITPHSGEEHAVGNDTGKHGKEIKITPQSSITEAELTGYGTVTMECSPRTGLDFNEMVLLQMENKAWLVHRQWFLDLPLPWLPGADTQGSNWIQKETLVTFKNPHAKKQDVVVLGSQEGAMHTALTGATEIQMSSGNLLFTGHLKCRLRMDKLQLKGMSYSMCTGKFKVVKEIAETQHGTIVIRVQYEGDGSPCKIPFEIMDLEKRHVLGRLITVNPIVTEKDSPVNIEAEPPFGDSYIIIGVEPEQLKLNWFKKGSSIGQMFETTMRGAKRMAILGDTAWDFGSLGGVFTSIGKALHQVFGAIYGAAFSGVSWTMKILIGVIITWIGMNSRSTSLSVSLVLVGIVTLYLEVMVQADSGCVVSWKNK.

Over 1-7 (KHAQRIE) the chain is Extracellular. A helical membrane pass occupies residues 8–28 (TWILRHPGFTIMAAILAYTIG). Residues 29–34 (TTHFQR) lie on the Cytoplasmic side of the membrane. The chain crosses the membrane as a helical span at residues 35–49 (ALIFILLTAVAPSMT). The Extracellular portion of the chain corresponds to 50–494 (MRCIGISNRD…LHQVFGAIYG (445 aa)). 4 disulfide bridges follow: cysteine 52-cysteine 79, cysteine 109-cysteine 170, cysteine 123-cysteine 154, and cysteine 141-cysteine 165. The N-linked (GlcNAc...) asparagine; by host glycan is linked to asparagine 116. Positions 147–160 (DRGWGNGCGLFGKG) are fusion peptide. N-linked (GlcNAc...) asparagine; by host glycosylation is present at asparagine 202. 2 disulfide bridges follow: cysteine 234–cysteine 334 and cysteine 351–cysteine 382. The helical transmembrane segment at 495-515 (AAFSGVSWTMKILIGVIITWI) threads the bilayer. Topologically, residues 516–521 (GMNSRS) are cytoplasmic. Residues 522 to 542 (TSLSVSLVLVGIVTLYLEVMV) traverse the membrane as a helical segment. The Extracellular segment spans residues 543-555 (QADSGCVVSWKNK).

Homodimer; in the endoplasmic reticulum and Golgi. Interacts with protein prM. Interacts with non-structural protein 1. In terms of assembly, homodimer; Homohexamer when secreted. Interacts with envelope protein E. In terms of processing, N-glycosylated. Post-translationally, N-glycosylated. The excreted form is glycosylated and this is required for efficient secretion of the protein from infected cells. Specific enzymatic cleavages in vivo yield mature proteins. Cleavages in the lumen of endoplasmic reticulum are performed by host signal peptidase, wereas cleavages in the cytoplasmic side are performed by serine protease NS3. Signal cleavage at the 2K-4B site requires a prior NS3 protease-mediated cleavage at the 4A-2K site.

It is found in the virion membrane. It localises to the host endoplasmic reticulum membrane. The protein localises to the secreted. May play a role in virus budding. Exerts cytotoxic effects by activating a mitochondrial apoptotic pathway through M ectodomain. May display a viroporin activity. Its function is as follows. Binds to host cell surface receptor and mediates fusion between viral and cellular membranes. Envelope protein is synthesized in the endoplasmic reticulum in the form of heterodimer with protein prM. They play a role in virion budding in the ER, and the newly formed immature particle is covered with 60 spikes composed of heterodimer between precursor prM and envelope protein E. The virion is transported to the Golgi apparatus where the low pH causes dissociation of PrM-E heterodimers and formation of E homodimers. prM-E cleavage is inefficient, and many virions are only partially matured. These uncleaved prM would play a role in immune evasion. Functionally, involved in immune evasion, pathogenesis and viral replication. Once cleaved off the polyprotein, is targeted to three destinations: the viral replication cycle, the plasma membrane and the extracellular compartment. Essential for viral replication. Required for formation of the replication complex and recruitment of other non-structural proteins to the ER-derived membrane structures. Excreted as a hexameric lipoparticle that plays a role against host immune response. Antagonizing the complement function. Binds to the host macrophages and dendritic cells. Inhibits signal transduction originating from Toll-like receptor 3 (TLR3). In terms of biological role, disrupts the host endothelial glycocalyx layer of host pulmonary microvascular endothelial cells, inducing degradation of sialic acid and shedding of heparan sulfate proteoglycans. NS1 induces expression of sialidases, heparanase, and activates cathepsin L, which activates heparanase via enzymatic cleavage. These effects are probably linked to the endothelial hyperpermeability observed in severe dengue disease. The sequence is that of Genome polyprotein from Dengue virus type 2 (strain Thailand/TH-36/1958) (DENV-2).